Reading from the N-terminus, the 97-residue chain is Large ribosomal subunit protein uL23 (97 aa).

It belongs to the universal ribosomal protein uL23 family. In terms of assembly, part of the 50S ribosomal subunit. Contacts protein L29, and trigger factor when it is bound to the ribosome.

One of the early assembly proteins it binds 23S rRNA. One of the proteins that surrounds the polypeptide exit tunnel on the outside of the ribosome. Forms the main docking site for trigger factor binding to the ribosome. This Anaeromyxobacter dehalogenans (strain 2CP-1 / ATCC BAA-258) protein is Large ribosomal subunit protein uL23.